Reading from the N-terminus, the 260-residue chain is UPF0246 protein Veis_4789 (260 aa).

It belongs to the UPF0246 family.

This Verminephrobacter eiseniae (strain EF01-2) protein is UPF0246 protein Veis_4789.